The primary structure comprises 351 residues: Glycerol-3-phosphate dehydrogenase 1-like protein (351 aa).

12–17 (GSGNWG) serves as a coordination point for NAD(+). Lysine 122 contributes to the substrate binding site. Residue alanine 155 coordinates NAD(+). The active-site Proton acceptor is lysine 206. Residues arginine 271, lysine 298, and glutamine 300 each coordinate NAD(+). A substrate-binding site is contributed by 271 to 272 (RN).

This sequence belongs to the NAD-dependent glycerol-3-phosphate dehydrogenase family. Interacts with SCN5A.

The protein resides in the cytoplasm. It carries out the reaction sn-glycerol 3-phosphate + NAD(+) = dihydroxyacetone phosphate + NADH + H(+). Its function is as follows. Plays a role in regulating cardiac sodium current; decreased enzymatic activity with resulting increased levels of glycerol 3-phosphate activating the DPD1L-dependent SCN5A phosphorylation pathway, may ultimately lead to decreased sodium current; cardiac sodium current may also be reduced due to alterations of NAD(H) balance induced by DPD1L. This chain is Glycerol-3-phosphate dehydrogenase 1-like protein (GPD1L), found in Pongo abelii (Sumatran orangutan).